The following is a 461-amino-acid chain: Acetylornithine aminotransferase, mitochondrial (461 aa).

Residues 36–56 form a disordered region; that stretch reads YATASQLTHPDPTEDSPSGKM. N6-(pyridoxal phosphate)lysine is present on K312.

The protein belongs to the class-III pyridoxal-phosphate-dependent aminotransferase family. Pyridoxal 5'-phosphate is required as a cofactor.

Its subcellular location is the mitochondrion matrix. It carries out the reaction N(2)-acetyl-L-ornithine + 2-oxoglutarate = N-acetyl-L-glutamate 5-semialdehyde + L-glutamate. It participates in amino-acid biosynthesis; L-arginine biosynthesis; N(2)-acetyl-L-ornithine from L-glutamate: step 4/4. This is Acetylornithine aminotransferase, mitochondrial (arg-8) from Neurospora crassa (strain ATCC 24698 / 74-OR23-1A / CBS 708.71 / DSM 1257 / FGSC 987).